An 855-amino-acid chain; its full sequence is DNA mismatch repair protein MutS (855 aa).

618 to 625 (GPNMGGKS) serves as a coordination point for ATP.

This sequence belongs to the DNA mismatch repair MutS family.

In terms of biological role, this protein is involved in the repair of mismatches in DNA. It is possible that it carries out the mismatch recognition step. This protein has a weak ATPase activity. In Shewanella loihica (strain ATCC BAA-1088 / PV-4), this protein is DNA mismatch repair protein MutS.